Consider the following 149-residue polypeptide: SsrA-binding protein (149 aa).

The protein belongs to the SmpB family.

It is found in the cytoplasm. Functionally, required for rescue of stalled ribosomes mediated by trans-translation. Binds to transfer-messenger RNA (tmRNA), required for stable association of tmRNA with ribosomes. tmRNA and SmpB together mimic tRNA shape, replacing the anticodon stem-loop with SmpB. tmRNA is encoded by the ssrA gene; the 2 termini fold to resemble tRNA(Ala) and it encodes a 'tag peptide', a short internal open reading frame. During trans-translation Ala-aminoacylated tmRNA acts like a tRNA, entering the A-site of stalled ribosomes, displacing the stalled mRNA. The ribosome then switches to translate the ORF on the tmRNA; the nascent peptide is terminated with the 'tag peptide' encoded by the tmRNA and targeted for degradation. The ribosome is freed to recommence translation, which seems to be the essential function of trans-translation. The chain is SsrA-binding protein from Thermosipho africanus (strain TCF52B).